The chain runs to 345 residues: Phosphoribosylformylglycinamidine cyclo-ligase (345 aa).

The protein belongs to the AIR synthase family.

It is found in the cytoplasm. The catalysed reaction is 2-formamido-N(1)-(5-O-phospho-beta-D-ribosyl)acetamidine + ATP = 5-amino-1-(5-phospho-beta-D-ribosyl)imidazole + ADP + phosphate + H(+). The protein operates within purine metabolism; IMP biosynthesis via de novo pathway; 5-amino-1-(5-phospho-D-ribosyl)imidazole from N(2)-formyl-N(1)-(5-phospho-D-ribosyl)glycinamide: step 2/2. In Prochlorococcus marinus (strain MIT 9211), this protein is Phosphoribosylformylglycinamidine cyclo-ligase.